The following is a 118-amino-acid chain: Membrane-anchored ubiquitin-fold protein 3 (118 aa).

The region spanning 7 to 73 (IDIKFRLYDG…LENNKTVGQC (67 aa)) is the Ubiquitin-like domain. Cysteine 113 is lipidated: S-palmitoyl cysteine. Position 115 is a cysteine methyl ester (cysteine 115). A lipid anchor (S-geranylgeranyl cysteine) is attached at cysteine 115. Residues 116–118 (TIL) constitute a propeptide, removed in mature form.

Ubiquitous, but three fold higher expression in senescing leaves.

It is found in the cell membrane. In terms of biological role, may serve as docking site to facilitate the association of other proteins to the plasma membrane. This is Membrane-anchored ubiquitin-fold protein 3 (MUB3) from Arabidopsis thaliana (Mouse-ear cress).